The sequence spans 196 residues: Translation machinery-associated protein 22 (196 aa).

The region spanning 97 to 168 (VIVKREARTK…EVVAYIHSLL (72 aa)) is the SUI1 domain.

It belongs to the DENR family. In terms of assembly, interacts with the 40S ribosomal subunit.

It is found in the cytoplasm. This is Translation machinery-associated protein 22 (TMA22) from Candida glabrata (strain ATCC 2001 / BCRC 20586 / JCM 3761 / NBRC 0622 / NRRL Y-65 / CBS 138) (Yeast).